The primary structure comprises 496 residues: Probable cytosol aminopeptidase (496 aa).

Positions 261 and 266 each coordinate Mn(2+). Lysine 273 is a catalytic residue. 3 residues coordinate Mn(2+): aspartate 284, aspartate 343, and glutamate 345. Residue arginine 347 is part of the active site.

It belongs to the peptidase M17 family. It depends on Mn(2+) as a cofactor.

It localises to the cytoplasm. The catalysed reaction is Release of an N-terminal amino acid, Xaa-|-Yaa-, in which Xaa is preferably Leu, but may be other amino acids including Pro although not Arg or Lys, and Yaa may be Pro. Amino acid amides and methyl esters are also readily hydrolyzed, but rates on arylamides are exceedingly low.. The enzyme catalyses Release of an N-terminal amino acid, preferentially leucine, but not glutamic or aspartic acids.. Functionally, presumably involved in the processing and regular turnover of intracellular proteins. Catalyzes the removal of unsubstituted N-terminal amino acids from various peptides. The polypeptide is Probable cytosol aminopeptidase (Bacillus licheniformis (strain ATCC 14580 / DSM 13 / JCM 2505 / CCUG 7422 / NBRC 12200 / NCIMB 9375 / NCTC 10341 / NRRL NRS-1264 / Gibson 46)).